A 223-amino-acid polypeptide reads, in one-letter code: Leucyl/phenylalanyl-tRNA--protein transferase (223 aa).

The protein belongs to the L/F-transferase family.

Its subcellular location is the cytoplasm. The catalysed reaction is N-terminal L-lysyl-[protein] + L-leucyl-tRNA(Leu) = N-terminal L-leucyl-L-lysyl-[protein] + tRNA(Leu) + H(+). The enzyme catalyses N-terminal L-arginyl-[protein] + L-leucyl-tRNA(Leu) = N-terminal L-leucyl-L-arginyl-[protein] + tRNA(Leu) + H(+). It carries out the reaction L-phenylalanyl-tRNA(Phe) + an N-terminal L-alpha-aminoacyl-[protein] = an N-terminal L-phenylalanyl-L-alpha-aminoacyl-[protein] + tRNA(Phe). Functionally, functions in the N-end rule pathway of protein degradation where it conjugates Leu, Phe and, less efficiently, Met from aminoacyl-tRNAs to the N-termini of proteins containing an N-terminal arginine or lysine. This Dinoroseobacter shibae (strain DSM 16493 / NCIMB 14021 / DFL 12) protein is Leucyl/phenylalanyl-tRNA--protein transferase.